The following is a 124-amino-acid chain: Splicing factor 3B subunit 6-like protein (124 aa).

The interaction with pre-mRNA branch site stretch occupies residues E16 to N29. Residues R19–H94 enclose the RRM domain.

The protein resides in the nucleus. Functionally, may be necessary for the splicing of pre-mRNA. The sequence is that of Splicing factor 3B subunit 6-like protein from Arabidopsis thaliana (Mouse-ear cress).